We begin with the raw amino-acid sequence, 496 residues long: Cytochrome P450 3A30 (496 aa).

Cysteine 441 is a heme binding site.

Belongs to the cytochrome P450 family. It depends on heme as a cofactor. Highly expressed in liver and intestine. Moderate expression in gill and spleen. Low expression in kidney, brain and heart.

It is found in the endoplasmic reticulum membrane. Its subcellular location is the microsome membrane. The catalysed reaction is an organic molecule + reduced [NADPH--hemoprotein reductase] + O2 = an alcohol + oxidized [NADPH--hemoprotein reductase] + H2O + H(+). Its function is as follows. Putative steroid 6-beta-hydroxylase. This chain is Cytochrome P450 3A30 (cyp3a30), found in Fundulus heteroclitus (Killifish).